Consider the following 183-residue polypeptide: Apo-citrate lyase phosphoribosyl-dephospho-CoA transferase (183 aa).

Belongs to the CitX family.

The catalysed reaction is apo-[citrate lyase ACP] + 2'-(5''-triphospho-alpha-D-ribosyl)-3'-dephospho-CoA = holo-[citrate lyase ACP] + diphosphate. Functionally, transfers 2-(5''-triphosphoribosyl)-3'-dephosphocoenzyme-A on a serine residue to the apo-acyl carrier protein (gamma chain) of the citrate lyase to yield holo-acyl carrier protein. This Escherichia coli O9:H4 (strain HS) protein is Apo-citrate lyase phosphoribosyl-dephospho-CoA transferase.